Reading from the N-terminus, the 494-residue chain is Metalloprotease TIKI1 (494 aa).

The N-terminal stretch at methionine 1–alanine 25 is a signal peptide. At asparagine 26–arginine 467 the chain is on the extracellular side. Asparagine 234 and asparagine 282 each carry an N-linked (GlcNAc...) asparagine glycan. A helical transmembrane segment spans residues threonine 468–glutamine 488. Residues methionine 489–leucine 494 are Cytoplasmic-facing.

It belongs to the TIKI family. Mn(2+) is required as a cofactor. Requires Co(2+) as cofactor.

Its subcellular location is the cell membrane. Metalloprotease that acts as a negative regulator of the Wnt signaling pathway by mediating the cleavage of the N-terminal residues of a subset of Wnt proteins. Following cleavage, Wnt proteins become oxidized and form large disulfide-bond oligomers, leading to their inactivation. The sequence is that of Metalloprotease TIKI1 (trabd2a) from Danio rerio (Zebrafish).